We begin with the raw amino-acid sequence, 547 residues long: Cilia- and flagella- associated protein 210 (547 aa).

3 coiled-coil regions span residues Glu50–Ala131, Val183–Asn251, and Ile342–Lys405. Positions Lys214–Met237 are disordered.

As to quaternary structure, microtubule inner protein component of sperm flagellar doublet microtubules.

It localises to the cytoplasm. The protein localises to the cytoskeleton. The protein resides in the cilium axoneme. Its subcellular location is the flagellum axoneme. Its function is as follows. Microtubule inner protein (MIP) part of the dynein-decorated doublet microtubules (DMTs) in cilia axoneme, which is required for motile cilia beating. This Mus musculus (Mouse) protein is Cilia- and flagella- associated protein 210 (Cfap210).